Consider the following 394-residue polypeptide: Elongation factor Tu (394 aa).

The tr-type G domain occupies Lys10–Glu204. Positions Gly19–Thr26 are G1. Gly19–Thr26 contributes to the GTP binding site. Thr26 provides a ligand contact to Mg(2+). The tract at residues Gly60–Asn64 is G2. The interval Asp81–Gly84 is G3. GTP contacts are provided by residues Asp81 to His85 and Asn136 to Asp139. The interval Asn136 to Asp139 is G4. The tract at residues Ser174–Leu176 is G5.

Belongs to the TRAFAC class translation factor GTPase superfamily. Classic translation factor GTPase family. EF-Tu/EF-1A subfamily. As to quaternary structure, monomer.

Its subcellular location is the cytoplasm. It catalyses the reaction GTP + H2O = GDP + phosphate + H(+). Functionally, GTP hydrolase that promotes the GTP-dependent binding of aminoacyl-tRNA to the A-site of ribosomes during protein biosynthesis. The protein is Elongation factor Tu of Psychromonas ingrahamii (strain DSM 17664 / CCUG 51855 / 37).